We begin with the raw amino-acid sequence, 214 residues long: Nascent polypeptide-associated complex subunit alpha (214 aa).

2 disordered regions span residues 1–57 (MSNP…NEKK) and 119–179 (ASAA…EDKD). The segment covering 22–38 (AEDEGSDSSDSEGEGEV) has biased composition (acidic residues). The 66-residue stretch at 52-117 (SRNEKKARKS…AKIEDLNSQA (66 aa)) folds into the NAC-A/B domain. Residues 119 to 128 (ASAAAQLAAQ) are compositionally biased toward low complexity. The span at 129–159 (ESHDHAGHDHSGHDHSHDHGKGKAVDTGDEK) shows a compositional bias: basic and acidic residues. Positions 160-171 (KEEEEDDTEEVD) are enriched in acidic residues. A UBA domain is found at 175–214 (LEDKDIELVMTQASVSRNKAVKALKENDNDIVNSIMALSI).

This sequence belongs to the NAC-alpha family. Part of the nascent polypeptide-associated complex (NAC), consisting of EGD2 and EGD1. NAC associates with ribosomes via EGD1.

It is found in the cytoplasm. It localises to the nucleus. In terms of biological role, component of the nascent polypeptide-associated complex (NAC), a dynamic component of the ribosomal exit tunnel, protecting the emerging polypeptides from interaction with other cytoplasmic proteins to ensure appropriate nascent protein targeting. The NAC complex also promotes mitochondrial protein import by enhancing productive ribosome interactions with the outer mitochondrial membrane and blocks the inappropriate interaction of ribosomes translating non-secretory nascent polypeptides with translocation sites in the membrane of the endoplasmic reticulum. EGD2 may also be involved in transcription regulation. The protein is Nascent polypeptide-associated complex subunit alpha (egd2) of Sclerotinia sclerotiorum (strain ATCC 18683 / 1980 / Ss-1) (White mold).